A 495-amino-acid chain; its full sequence is uncharacterized protein (495 aa).

12 helical membrane passes run 43 to 63 (IIIS…MPSI), 75 to 95 (TLVV…PLIF), 106 to 126 (PLNI…ALSV), 128 to 148 (LAMF…GLGI), 168 to 188 (IYFL…GFIA), 196 to 216 (WEFW…VVFL), 284 to 304 (PIMI…YLLF), 323 to 343 (GLTY…LLPL), 366 to 386 (PMAF…GWTV), 390 to 410 (VFWF…VMTF), 426 to 446 (ASAM…FPLF), and 461 to 481 (SLLA…YMFG).

Belongs to the major facilitator superfamily. CAR1 family.

The protein resides in the membrane. This is an uncharacterized protein from Schizosaccharomyces pombe (strain 972 / ATCC 24843) (Fission yeast).